The chain runs to 265 residues: Orotidine 5'-phosphate decarboxylase (265 aa).

Substrate contacts are provided by residues aspartate 37, 59 to 61, 91 to 100, tyrosine 217, and arginine 236; these read KTH and DRKFADIGNT. Lysine 93 acts as the Proton donor in catalysis.

Belongs to the OMP decarboxylase family.

It catalyses the reaction orotidine 5'-phosphate + H(+) = UMP + CO2. It functions in the pathway pyrimidine metabolism; UMP biosynthesis via de novo pathway; UMP from orotate: step 2/2. The protein is Orotidine 5'-phosphate decarboxylase (URA3) of Saccharomycopsis fibuligera (Yeast).